The chain runs to 75 residues: ATP synthase subunit c (75 aa).

The next 2 helical transmembrane spans lie at 8 to 28 (FIAI…IANI) and 52 to 72 (IGAA…MLLI).

Belongs to the ATPase C chain family. In terms of assembly, F-type ATPases have 2 components, F(1) - the catalytic core - and F(0) - the membrane proton channel. F(1) has five subunits: alpha(3), beta(3), gamma(1), delta(1), epsilon(1). F(0) has three main subunits: a(1), b(2) and c(10-14). The alpha and beta chains form an alternating ring which encloses part of the gamma chain. F(1) is attached to F(0) by a central stalk formed by the gamma and epsilon chains, while a peripheral stalk is formed by the delta and b chains.

It is found in the cell membrane. Functionally, f(1)F(0) ATP synthase produces ATP from ADP in the presence of a proton or sodium gradient. F-type ATPases consist of two structural domains, F(1) containing the extramembraneous catalytic core and F(0) containing the membrane proton channel, linked together by a central stalk and a peripheral stalk. During catalysis, ATP synthesis in the catalytic domain of F(1) is coupled via a rotary mechanism of the central stalk subunits to proton translocation. In terms of biological role, key component of the F(0) channel; it plays a direct role in translocation across the membrane. A homomeric c-ring of between 10-14 subunits forms the central stalk rotor element with the F(1) delta and epsilon subunits. The chain is ATP synthase subunit c from Wolbachia pipientis wMel.